We begin with the raw amino-acid sequence, 192 residues long: NADH-ubiquinone oxidoreductase subunit 9 (192 aa).

Belongs to the complex I 30 kDa subunit family. Complex I is composed of about 30 different subunits.

Its subcellular location is the mitochondrion inner membrane. The enzyme catalyses a ubiquinone + NADH + 5 H(+)(in) = a ubiquinol + NAD(+) + 4 H(+)(out). Functionally, core subunit of the mitochondrial membrane respiratory chain NADH dehydrogenase (Complex I) that is believed to belong to the minimal assembly required for catalysis. Complex I functions in the transfer of electrons from NADH to the respiratory chain. The immediate electron acceptor for the enzyme is believed to be ubiquinone. This chain is NADH-ubiquinone oxidoreductase subunit 9 (NAD9), found in Prototheca wickerhamii.